The sequence spans 560 residues: Choline/ethanolamine transporter FLVCR1 (560 aa).

The tract at residues 1–43 is disordered; that stretch reads MARPDDEVGPAVAPGHPLGKGYLPVPKGAPDGEARLVPQNGPE. The Cytoplasmic segment spans residues 1–92; that stretch reads MARPDDEVGP…EDVPCPACPP (92 aa). A helical membrane pass occupies residues 93-117; that stretch reads RTALSPRRFVVLLIFSLYSLVNAFQ. The Extracellular segment spans residues 118–135; it reads WIQYSSISNVFEDFYEVS. The helical transmembrane segment at 136 to 163 threads the bilayer; that stretch reads PLHINWLSMVYMVAYVPLIFPATWLLDT. At 164-165 the chain is on the cytoplasmic side; that stretch reads RG. The helical transmembrane segment at 166 to 185 threads the bilayer; sequence LRLTALLGSGLNCLGAWVKC. Residues 186-192 lie on the Extracellular side of the membrane; sequence GSVQRHL. A helical membrane pass occupies residues 193 to 221; that stretch reads FWVTMLGQILCSVAQVFILGLPSPVASVW. Residue Gln-207 coordinates ethanolamine. Residues 222–226 are Cytoplasmic-facing; the sequence is FGPKE. A helical transmembrane segment spans residues 227-252; the sequence is VSTACATAVLGNQLGTAVGFLLPPVL. The Extracellular segment spans residues 253–270; that stretch reads VPALGTQNSTGLLAHTQN. Asn-270 carries an N-linked (GlcNAc...) asparagine glycan. The helical transmembrane segment at 271-300 threads the bilayer; the sequence is NTDLLAHNINTMFYGTAFISTFLFFLTIIA. Residues 301–336 lie on the Cytoplasmic side of the membrane; sequence FKEKPPLPPSQAQAVLRDSPPEEYSYKSSIWNLCRN. Residues 337–367 form a helical membrane-spanning segment; it reads IPFVLLLVSYGIMTGAFYSISTLLNQIILTY. Over 368–371 the chain is Extracellular; that stretch reads YVGE. Residues 372 to 400 form a helical membrane-spanning segment; the sequence is EVNAGRIGLTLVVAGMVGSILCGLWLDYT. The Cytoplasmic portion of the chain corresponds to 401-402; sequence KT. Residues 403–425 traverse the membrane as a helical segment; the sequence is YKQTTLIVYVLSFIGMLIFTFTL. Topologically, residues 426 to 428 are extracellular; that stretch reads NLG. A helical membrane pass occupies residues 429–458; it reads YIIVVFFTGGILGFFMTGYLPLGFEFAVEI. Residues 459–466 lie on the Cytoplasmic side of the membrane; sequence TYPESEGM. A helical membrane pass occupies residues 467–492; the sequence is SSGLLNTAAQILGIFFTLAQGKITTD. Ethanolamine is bound at residue Gln-476. Gln-476 serves as a coordination point for choline. Over 493–495 the chain is Extracellular; the sequence is YNS. The helical transmembrane segment at 496 to 518 threads the bilayer; it reads PEAGNIFLCAWMFVGIILTALIK. Over 519 to 560 the chain is Cytoplasmic; it reads SDLRRHNINTGLTNIDVKAVPVDSRVDPKPKVMVSIQSESSL. Ser-542 carries the phosphoserine modification.

The protein belongs to the major facilitator superfamily. Feline leukemia virus subgroup C receptor (TC 2.A.1.28.1) family.

The protein resides in the cell membrane. It localises to the mitochondrion membrane. It carries out the reaction choline(out) = choline(in). It catalyses the reaction ethanolamine(in) = ethanolamine(out). The enzyme catalyses heme b(in) = heme b(out). Its function is as follows. Uniporter that mediates the transport of extracellular choline and ethanolamine into cells, thereby playing a key role in phospholipid biosynthesis. Choline and ethanolamine are the precursors of phosphatidylcholine and phosphatidylethanolamine, respectively, the two most abundant phospholipids. Transport is not coupled with proton transport and is exclusively driven by the choline (or ethanolamine) gradient across the plasma membrane. Also acts as a heme b transporter that mediates heme efflux from the cytoplasm to the extracellular compartment. Uniporter that mediates the transport of extracellular choline and ethanolamine into cells. Choline and ethanolamine are the precursors of phosphatidylcholine and phosphatidylethanolamine, respectively, the two most abundant phospholipids. Transport is not coupled with proton transport and is exclusively driven by the choline (or ethanolamine) gradient across the plasma membrane. Also acts as a heme b transporter that mediates heme efflux from the cytoplasm to the extracellular compartment. Heme export depends on the presence of HPX and is required to maintain intracellular free heme balance, protecting cells from heme toxicity. Heme export provides protection from heme or ferrous iron toxicities in liver, brain, sensory neurons and during erythropoiesis, a process in which heme synthesis intensifies. Possibly export coproporphyrin and protoporphyrin IX, which are both intermediate products in the heme biosynthetic pathway. Does not export bilirubin. The molecular mechanism of heme transport, whether electrogenic, electroneutral or coupled to other ions, remains to be elucidated. Functionally, heme transporter that promotes heme efflux from the mitochondrion to the cytoplasm. Essential for erythroid differentiation. The sequence is that of Choline/ethanolamine transporter FLVCR1 (Flvcr1) from Mus musculus (Mouse).